Here is a 188-residue protein sequence, read N- to C-terminus: Protein GrpE (188 aa).

The span at 1-22 shows a compositional bias: low complexity; sequence MEENKQNQNLNTEETTEQQTEA. The disordered stretch occupies residues 1–26; that stretch reads MEENKQNQNLNTEETTEQQTEAETVE.

The protein belongs to the GrpE family. As to quaternary structure, homodimer.

The protein localises to the cytoplasm. Functionally, participates actively in the response to hyperosmotic and heat shock by preventing the aggregation of stress-denatured proteins, in association with DnaK and GrpE. It is the nucleotide exchange factor for DnaK and may function as a thermosensor. Unfolded proteins bind initially to DnaJ; upon interaction with the DnaJ-bound protein, DnaK hydrolyzes its bound ATP, resulting in the formation of a stable complex. GrpE releases ADP from DnaK; ATP binding to DnaK triggers the release of the substrate protein, thus completing the reaction cycle. Several rounds of ATP-dependent interactions between DnaJ, DnaK and GrpE are required for fully efficient folding. The polypeptide is Protein GrpE (Exiguobacterium sibiricum (strain DSM 17290 / CCUG 55495 / CIP 109462 / JCM 13490 / 255-15)).